The following is a 638-amino-acid chain: 1-deoxy-D-xylulose-5-phosphate synthase (638 aa).

Residues histidine 71 and 112–114 (SHA) each bind thiamine diphosphate. Aspartate 144 is a Mg(2+) binding site. Thiamine diphosphate contacts are provided by residues 145–146 (GA), asparagine 173, tyrosine 284, and glutamate 365. Residue asparagine 173 participates in Mg(2+) binding.

The protein belongs to the transketolase family. DXPS subfamily. In terms of assembly, homodimer. Mg(2+) is required as a cofactor. The cofactor is thiamine diphosphate.

The enzyme catalyses D-glyceraldehyde 3-phosphate + pyruvate + H(+) = 1-deoxy-D-xylulose 5-phosphate + CO2. The protein operates within metabolic intermediate biosynthesis; 1-deoxy-D-xylulose 5-phosphate biosynthesis; 1-deoxy-D-xylulose 5-phosphate from D-glyceraldehyde 3-phosphate and pyruvate: step 1/1. Functionally, catalyzes the acyloin condensation reaction between C atoms 2 and 3 of pyruvate and glyceraldehyde 3-phosphate to yield 1-deoxy-D-xylulose-5-phosphate (DXP). This is 1-deoxy-D-xylulose-5-phosphate synthase from Mycobacterium sp. (strain JLS).